Reading from the N-terminus, the 425-residue chain is Kynureninase (425 aa).

Residues Leu105, Thr106, 133 to 136 (FPSD), Asp218, His221, and Tyr243 contribute to the pyridoxal 5'-phosphate site. An N6-(pyridoxal phosphate)lysine modification is found at Lys244. Pyridoxal 5'-phosphate-binding residues include Trp274 and Asn302.

Belongs to the kynureninase family. As to quaternary structure, homodimer. Pyridoxal 5'-phosphate is required as a cofactor.

The enzyme catalyses L-kynurenine + H2O = anthranilate + L-alanine + H(+). It catalyses the reaction 3-hydroxy-L-kynurenine + H2O = 3-hydroxyanthranilate + L-alanine + H(+). It participates in amino-acid degradation; L-kynurenine degradation; L-alanine and anthranilate from L-kynurenine: step 1/1. Its pathway is cofactor biosynthesis; NAD(+) biosynthesis; quinolinate from L-kynurenine: step 2/3. Catalyzes the cleavage of L-kynurenine (L-Kyn) and L-3-hydroxykynurenine (L-3OHKyn) into anthranilic acid (AA) and 3-hydroxyanthranilic acid (3-OHAA), respectively. In Christiangramia forsetii (strain DSM 17595 / CGMCC 1.15422 / KT0803) (Gramella forsetii), this protein is Kynureninase.